The following is a 552-amino-acid chain: Leucine-rich repeat-containing protein 31 (552 aa).

A disordered region spans residues 1 to 65 (MSQTRKKTSS…SETAKPLSSE (65 aa)). A compositionally biased stretch (basic and acidic residues) spans 31–41 (ESRKEDNDLKT). The segment covering 42 to 58 (SDSQPSDWIQKTATSET) has biased composition (polar residues). 9 LRR repeats span residues 227–246 (SLEV…LNSI), 255–275 (NLKV…KILD), 283–293 (ELRKLDLSCNK), 311–331 (HLQV…MSLT), 339–360 (NLQE…NLLS), 367–387 (ALKS…TALA), 395–415 (ALEV…KLLL), 423–443 (SLQV…ALLA), and 453–475 (KLQK…MFCQ).

The protein is Leucine-rich repeat-containing protein 31 (LRRC31) of Homo sapiens (Human).